A 398-amino-acid polypeptide reads, in one-letter code: Lysophospholipid transporter LplT (398 aa).

11 consecutive transmembrane segments (helical) span residues A17–L37, I52–A72, L90–V110, G137–L157, A163–I183, L226–L246, I256–I276, M285–W305, V309–L329, I352–V372, and T373–N393.

It belongs to the major facilitator superfamily. LplT (TC 2.A.1.42) family.

The protein localises to the cell inner membrane. Functionally, catalyzes the facilitated diffusion of 2-acyl-glycero-3-phosphoethanolamine (2-acyl-GPE) into the cell. This Photorhabdus laumondii subsp. laumondii (strain DSM 15139 / CIP 105565 / TT01) (Photorhabdus luminescens subsp. laumondii) protein is Lysophospholipid transporter LplT.